The primary structure comprises 62 residues: Photosystem II reaction center protein Z (62 aa).

The next 2 membrane-spanning stretches (helical) occupy residues 8–28 and 41–61; these read LVVALIVYSFVLIVAVPITLS and VTASIGWVGMVLLTGVLNSFV.

It belongs to the PsbZ family. PSII is composed of 1 copy each of membrane proteins PsbA, PsbB, PsbC, PsbD, PsbE, PsbF, PsbH, PsbI, PsbJ, PsbK, PsbL, PsbM, PsbT, PsbX, PsbY, PsbZ, Psb30/Ycf12, at least 3 peripheral proteins of the oxygen-evolving complex and a large number of cofactors. It forms dimeric complexes.

The protein resides in the plastid. Its subcellular location is the chloroplast thylakoid membrane. Functionally, may control the interaction of photosystem II (PSII) cores with the light-harvesting antenna, regulates electron flow through the 2 photosystem reaction centers. PSII is a light-driven water plastoquinone oxidoreductase, using light energy to abstract electrons from H(2)O, generating a proton gradient subsequently used for ATP formation. The protein is Photosystem II reaction center protein Z of Cyanidioschyzon merolae (strain NIES-3377 / 10D) (Unicellular red alga).